The following is a 103-amino-acid chain: Small ribosomal subunit protein uS10 (103 aa).

This sequence belongs to the universal ribosomal protein uS10 family. Part of the 30S ribosomal subunit.

Functionally, involved in the binding of tRNA to the ribosomes. This Jannaschia sp. (strain CCS1) protein is Small ribosomal subunit protein uS10.